We begin with the raw amino-acid sequence, 209 residues long: MDADGSTTDASQLGITGDYIGGGHYVLQSSDGDAEGSLASGDHDESCGSKDPYREQDIYLPIANVARIMKTSIPSSGKIAKDAKECVQECVSEFISFITSEASERCHQEKRKTINGEDILFAMSTLGFDSYVEPLKQYLQKYRESMKGEKGINATVVTTTDAIPEELTEESFSGPLATSIITADGQQQNVMVYTTAYQQIPGVQPIQFT.

Residues 1–53 (MDADGSTTDASQLGITGDYIGGGHYVLQSSDGDAEGSLASGDHDESCGSKDPY) form an a domain region. The segment at 31 to 52 (DGDAEGSLASGDHDESCGSKDP) is disordered. The segment covering 41–52 (GDHDESCGSKDP) has biased composition (basic and acidic residues). The segment at 54 to 143 (REQDIYLPIA…PLKQYLQKYR (90 aa)) is b domain. Residues 60 to 66 (LPIANVA) mediate DNA binding. The segment at 87–98 (VQECVSEFISFI) is subunit association domain (SAD). Residues 144–209 (ESMKGEKGIN…IPGVQPIQFT (66 aa)) are c domain.

It belongs to the NFYB/HAP3 subunit family. Heterotrimeric transcription factor composed of three components, NF-YA, NF-YB and NF-YC. NF-YB and NF-YC must interact and dimerize for NF-YA association and DNA binding.

It is found in the nucleus. Component of the sequence-specific heterotrimeric transcription factor (NF-Y) which specifically recognizes a 5'-CCAAT-3' box motif found in the promoters of its target genes. NF-Y can function as both an activator and a repressor, depending on its interacting cofactors. In Petromyzon marinus (Sea lamprey), this protein is Nuclear transcription factor Y subunit beta (NFYB).